The following is a 484-amino-acid chain: UDP-N-acetylmuramate--L-alanine ligase (484 aa).

Residue 125–131 (GTHGKTT) participates in ATP binding.

This sequence belongs to the MurCDEF family.

Its subcellular location is the cytoplasm. It catalyses the reaction UDP-N-acetyl-alpha-D-muramate + L-alanine + ATP = UDP-N-acetyl-alpha-D-muramoyl-L-alanine + ADP + phosphate + H(+). It functions in the pathway cell wall biogenesis; peptidoglycan biosynthesis. Functionally, cell wall formation. The protein is UDP-N-acetylmuramate--L-alanine ligase of Buchnera aphidicola subsp. Acyrthosiphon pisum (strain Tuc7).